A 327-amino-acid chain; its full sequence is tRNA dimethylallyltransferase (327 aa).

Position 14–21 (14–21 (GPTASGKT)) interacts with ATP. 16–21 (TASGKT) contacts substrate. Interaction with substrate tRNA regions lie at residues 39-42 (DSAL) and 163-167 (QRIQR).

It belongs to the IPP transferase family. Monomer. Mg(2+) is required as a cofactor.

It carries out the reaction adenosine(37) in tRNA + dimethylallyl diphosphate = N(6)-dimethylallyladenosine(37) in tRNA + diphosphate. In terms of biological role, catalyzes the transfer of a dimethylallyl group onto the adenine at position 37 in tRNAs that read codons beginning with uridine, leading to the formation of N6-(dimethylallyl)adenosine (i(6)A). The protein is tRNA dimethylallyltransferase of Xanthomonas oryzae pv. oryzae (strain KACC10331 / KXO85).